The primary structure comprises 362 residues: Homoserine O-acetyltransferase FUB5 (362 aa).

The region spanning 12 to 335 (NVMIICHALS…VSDDGHDAFL (324 aa)) is the AB hydrolase-1 domain. Ser-110 (nucleophile) is an active-site residue. Positions 195–232 (RFGRDTGNKKKTQQQDSKTIPNNGTPIHSQGGADETPV) are disordered. Positions 208 to 222 (QQDSKTIPNNGTPIH) are enriched in polar residues. Residues Asp-302 and His-331 contribute to the active site.

Belongs to the AB hydrolase superfamily. MetX family.

The enzyme catalyses L-homoserine + acetyl-CoA = O-acetyl-L-homoserine + CoA. It participates in mycotoxin biosynthesis. Its function is as follows. Homoserine O-acetyltransferase; part of the gene cluster that mediates the biosynthesis of fusaric acid, a mycotoxin with low to moderate toxicity to animals and humans, but with high phytotoxic properties. L-aspartate is suggested as fusaric acid amino acid precursor that is activated and further processed to O-acetyl-L-homoserine by cluster enzymes aspartate kinase FUB3 and homoserine O-acetyltransferase FUB5, as well as enzymes of the primary metabolism. The polyketide synthase (PKS) FUB1 generates the triketide trans-2-hexenal which is presumptively released by the hydrolase FUB4 and linked to the NRPS-bound amino acid precursor by NAD(P)-dependent dehydrogenase FUB6. FUB1, FUB4, and the non-canonical NRPS Fub8 may form an enzyme complex. Further processing of the NRPS-bound intermediate might be carried out by FUB6 and the O-acetylhomoserine FUB7, enabling a spontaneous electrocyclization to close the carbon backbone of fusaric acid. Dihydrofusaric acid is likely to be released via reduction by the thioester reductase (TR) domain of FUB8 whereupon the final oxidation to fusaric acid may (also) be performed by the FMN-dependent dehydrogenase FUB9. The polypeptide is Homoserine O-acetyltransferase FUB5 (Fusarium oxysporum f. sp. lycopersici (strain 4287 / CBS 123668 / FGSC 9935 / NRRL 34936) (Fusarium vascular wilt of tomato)).